We begin with the raw amino-acid sequence, 86 residues long: Protein P17 (86 aa).

The disordered stretch occupies residues 63–86 (SPAEKPDNQPELTGITFEGDNNDQ).

In terms of assembly, homotetramer.

Functionally, assembly protein that acts late in phage assembly, after capsid protein folding and multimerization, and sorting of membrane proteins has occurred. The major coat protein P3 and two assembly factors (P10 and P17) are needed during the assembly of the virus particle inside the host cell, when the capsid protein multimers are capable of enclosing the host-derived membrane, containing the virus-encoded membrane-associated proteins. The sequence is that of Protein P17 (XVII) from Enterobacteria phage PRD1 (Bacteriophage PRD1).